A 102-amino-acid chain; its full sequence is Feather keratin (102 aa).

S1 carries the post-translational modification N-acetylserine.

It belongs to the avian keratin family. As to quaternary structure, the avian keratins (F-ker, S-ker, C-ker and B-ker) are a complex mixture of very similar polypeptides.

This Dromaius novaehollandiae (Emu) protein is Feather keratin.